The chain runs to 977 residues: Leucine--tRNA ligase (977 aa).

The 'HIGH' region motif lies at 11-21; that stretch reads PYVNGYLHLGH. The segment at 220 to 318 is insert; that stretch reads VFYVYELYSL…EYYNTKVETQ (99 aa). Residues 699 to 703 carry the 'KMSKS' region motif; that stretch reads KMSKS. An ATP-binding site is contributed by K702.

This sequence belongs to the class-I aminoacyl-tRNA synthetase family.

It is found in the cytoplasm. It catalyses the reaction tRNA(Leu) + L-leucine + ATP = L-leucyl-tRNA(Leu) + AMP + diphosphate. In Nanoarchaeum equitans (strain Kin4-M), this protein is Leucine--tRNA ligase (leuS).